Reading from the N-terminus, the 553-residue chain is Phospholipase B-like 1 (553 aa).

An N-terminal signal peptide occupies residues 1-38 (MTRGGPGGRPGLPQPPPLLLLLLLLPLLLVTAEPPKPA). N-linked (GlcNAc...) (high mannose) asparagine; alternate glycosylation occurs at N71. N-linked (GlcNAc...) (hybrid) asparagine; alternate glycosylation occurs at N71. Residues 209–227 (LSPTKNGSLKVFKRWDMGH) constitute a propeptide, removed in mature form. N308 and N366 each carry an N-linked (GlcNAc...) (high mannose) asparagine; alternate glycan. N-linked (GlcNAc...) (hybrid) asparagine; alternate glycans are attached at residues N308 and N366. A glycan (N-linked (GlcNAc...) asparagine) is linked at N411. 2 disulfides stabilise this stretch: C470–C475 and C474–C489. N-linked (GlcNAc...) (high mannose) asparagine; alternate glycosylation occurs at N526. Residue N526 is glycosylated (N-linked (GlcNAc...) (hybrid) asparagine; alternate).

This sequence belongs to the phospholipase B-like family. May form a homodimer, each monomer is composed of a chain A and a chain B. The maturation cleavages that produces chains A and B are required to open the putative substrate binding pocket. Both chains A and B remain associated in the mature protein. As to expression, expressed in neutrophils and monocytes.

Its subcellular location is the lysosome. Functionally, in view of the small size of the putative binding pocket, it has been proposed that it may act as an amidase or a peptidase. Exhibits a weak phospholipase activity, acting on various phospholipids, including phosphatidylcholine, phosphatidylinositol, phosphatidylethanolamine and lysophospholipids. This Homo sapiens (Human) protein is Phospholipase B-like 1 (PLBD1).